The primary structure comprises 197 residues: Holliday junction branch migration complex subunit RuvA (197 aa).

Positions 1-63 are domain I; sequence MIEFIRGYVD…EDVLALYGFH (63 aa). The segment at 64 to 142 is domain II; it reads TRQERMLFAK…AIVPDAFPNL (79 aa). Positions 143 to 149 are flexible linker; it reads FTEPLEE. Positions 149-197 are domain III; that stretch reads ETNALSEAIEALKALGYADKEIQKVVPMLRQERLSTEGYIKLALQKLLK.

This sequence belongs to the RuvA family. As to quaternary structure, homotetramer. Forms an RuvA(8)-RuvB(12)-Holliday junction (HJ) complex. HJ DNA is sandwiched between 2 RuvA tetramers; dsDNA enters through RuvA and exits via RuvB. An RuvB hexamer assembles on each DNA strand where it exits the tetramer. Each RuvB hexamer is contacted by two RuvA subunits (via domain III) on 2 adjacent RuvB subunits; this complex drives branch migration. In the full resolvosome a probable DNA-RuvA(4)-RuvB(12)-RuvC(2) complex forms which resolves the HJ.

It is found in the cytoplasm. The RuvA-RuvB-RuvC complex processes Holliday junction (HJ) DNA during genetic recombination and DNA repair, while the RuvA-RuvB complex plays an important role in the rescue of blocked DNA replication forks via replication fork reversal (RFR). RuvA specifically binds to HJ cruciform DNA, conferring on it an open structure. The RuvB hexamer acts as an ATP-dependent pump, pulling dsDNA into and through the RuvAB complex. HJ branch migration allows RuvC to scan DNA until it finds its consensus sequence, where it cleaves and resolves the cruciform DNA. The polypeptide is Holliday junction branch migration complex subunit RuvA (Anoxybacillus flavithermus (strain DSM 21510 / WK1)).